Consider the following 118-residue polypeptide: Nucleoid-associated protein CTN_1899 (118 aa).

It belongs to the YbaB/EbfC family. In terms of assembly, homodimer.

Its subcellular location is the cytoplasm. The protein resides in the nucleoid. Binds to DNA and alters its conformation. May be involved in regulation of gene expression, nucleoid organization and DNA protection. The protein is Nucleoid-associated protein CTN_1899 of Thermotoga neapolitana (strain ATCC 49049 / DSM 4359 / NBRC 107923 / NS-E).